Consider the following 146-residue polypeptide: Small ribosomal subunit protein bS6 (146 aa).

The segment at 94-146 (GPITTPSPMMQEGKSRPPHSSDEDSENTAPAKAKTADSPGEDTRTTEESDPKP) is disordered. Basic and acidic residues-rich tracts occupy residues 106 to 115 (GKSRPPHSSD) and 134 to 146 (EDTR…DPKP).

Belongs to the bacterial ribosomal protein bS6 family.

In terms of biological role, binds together with bS18 to 16S ribosomal RNA. The sequence is that of Small ribosomal subunit protein bS6 from Nitrosomonas europaea (strain ATCC 19718 / CIP 103999 / KCTC 2705 / NBRC 14298).